The chain runs to 426 residues: Glutamate-1-semialdehyde 2,1-aminomutase (426 aa).

N6-(pyridoxal phosphate)lysine is present on K263.

It belongs to the class-III pyridoxal-phosphate-dependent aminotransferase family. HemL subfamily. As to quaternary structure, homodimer. It depends on pyridoxal 5'-phosphate as a cofactor.

Its subcellular location is the cytoplasm. It carries out the reaction (S)-4-amino-5-oxopentanoate = 5-aminolevulinate. It participates in porphyrin-containing compound metabolism; protoporphyrin-IX biosynthesis; 5-aminolevulinate from L-glutamyl-tRNA(Glu): step 2/2. The protein is Glutamate-1-semialdehyde 2,1-aminomutase of Caldicellulosiruptor bescii (strain ATCC BAA-1888 / DSM 6725 / KCTC 15123 / Z-1320) (Anaerocellum thermophilum).